Reading from the N-terminus, the 274-residue chain is Enoyl-CoA isomerase/hydratase fer4 (274 aa).

Residues 77-81 (AGADL) and glycine 124 contribute to the substrate site. The stretch at 79–109 (ADLKERREMSEAEVIEFLQDLRHMLEQVEKL) forms a coiled coil.

This sequence belongs to the enoyl-CoA hydratase/isomerase family.

It carries out the reaction a (3S)-3-hydroxyacyl-CoA = a (2E)-enoyl-CoA + H2O. The enzyme catalyses a 4-saturated-(3S)-3-hydroxyacyl-CoA = a (3E)-enoyl-CoA + H2O. It functions in the pathway siderophore biosynthesis. Functionally, enoyl-CoA isomerase/hydratase; part of the gene cluster that mediates the biosynthesis of siderophore ferrichrome A which is contributing to organismal virulence. The first step of ferrichrome A biosynthesis is performed by the HMG-CoA synthase hcs1 which catalyzes the generation of HMG-CoA and CoA using acetoacetyl-CoA and acetyl-CoA as substrates. The enoyl-CoA isomerase/hydratase fer4 then catalyzes the conversion of hcs1-produced HMG-CoA to methylglutaconyl-CoA. The acyltransferase fer5 then fuses the fer4-generated methylglutaconyl-CoA with sid1-generated hydroxyornithine to yield methylglutaconyl hydroxyornithine. Methylglutaconyl hydroxyornithine is then available for use by the NRPS fer3 to generate ferrichrome A. This chain is Enoyl-CoA isomerase/hydratase fer4, found in Mycosarcoma maydis (Corn smut fungus).